Here is a 654-residue protein sequence, read N- to C-terminus: Threonine--tRNA ligase (654 aa).

One can recognise a TGS domain in the interval methionine 1–threonine 63. Residues aspartate 247–proline 544 form a catalytic region. The Zn(2+) site is built by cysteine 344, histidine 395, and histidine 521.

It belongs to the class-II aminoacyl-tRNA synthetase family. In terms of assembly, homodimer. The cofactor is Zn(2+).

It is found in the cytoplasm. It catalyses the reaction tRNA(Thr) + L-threonine + ATP = L-threonyl-tRNA(Thr) + AMP + diphosphate + H(+). Its function is as follows. Catalyzes the attachment of threonine to tRNA(Thr) in a two-step reaction: L-threonine is first activated by ATP to form Thr-AMP and then transferred to the acceptor end of tRNA(Thr). Also edits incorrectly charged L-seryl-tRNA(Thr). The protein is Threonine--tRNA ligase of Dinoroseobacter shibae (strain DSM 16493 / NCIMB 14021 / DFL 12).